The sequence spans 344 residues: MSNMMKALVKAKAEPGIWMEEVPVPEIGPNDVLIKIRKTAICGTDVHIYNWDQWAQKTVPVPMVTGHEFVGTVADFGAAVTEYKVGQRVSGEGHIVCGHCRNCRAGRGHLCRNTLGVGVNRPGAFGEYLAIPQHNVVPIPDDVPDEIAAIFDPLGNAVHTALSFDLVGEDVLVTGAGPIGIMGALVAQCVGARKVVITDINPVRLALAKKLGVQHVVDASKEKLRDVMPVLGMTEGFDVGLEMSGAAPAFRDMIDTMNNGGKIAILGIAPTGFEIDWNKVIFKMLHLKGIYGREMFETWYKMIALVQGPLDVSGLITHRIGIDDFQEGFDAMRSGSSGKVVMDW.

Cys-42 provides a ligand contact to Zn(2+). Residues Thr-44 and His-47 each act as charge relay system in the active site. 6 residues coordinate Zn(2+): His-67, Glu-68, Cys-97, Cys-100, Cys-103, and Cys-111. NAD(+) is bound by residues Ile-179, Asp-199, Arg-204, 266 to 268 (LGI), and 290 to 291 (IY).

The protein belongs to the zinc-containing alcohol dehydrogenase family. Homotetramer. The cofactor is Zn(2+).

Its subcellular location is the cytoplasm. The enzyme catalyses L-threonine + NAD(+) = (2S)-2-amino-3-oxobutanoate + NADH + H(+). It functions in the pathway amino-acid degradation; L-threonine degradation via oxydo-reductase pathway; glycine from L-threonine: step 1/2. Its function is as follows. Catalyzes the NAD(+)-dependent oxidation of L-threonine to 2-amino-3-ketobutyrate. The chain is L-threonine 3-dehydrogenase from Mesorhizobium japonicum (strain LMG 29417 / CECT 9101 / MAFF 303099) (Mesorhizobium loti (strain MAFF 303099)).